The following is a 62-amino-acid chain: Large ribosomal subunit protein eL37 (62 aa).

Positions 20, 23, 35, and 38 each coordinate Zn(2+). A C4-type zinc finger spans residues 20–38; that stretch reads CRRCGRVSYNVKKGYCAAC.

This sequence belongs to the eukaryotic ribosomal protein eL37 family. Part of the 50S ribosomal subunit. It depends on Zn(2+) as a cofactor.

Its function is as follows. Binds to the 23S rRNA. The chain is Large ribosomal subunit protein eL37 from Pyrococcus furiosus (strain ATCC 43587 / DSM 3638 / JCM 8422 / Vc1).